The sequence spans 514 residues: Probable cytochrome P450 6w1 (514 aa).

Cysteine 450 contacts heme.

It belongs to the cytochrome P450 family. It depends on heme as a cofactor.

It localises to the endoplasmic reticulum membrane. It is found in the microsome membrane. Functionally, may be involved in the metabolism of insect hormones and in the breakdown of synthetic insecticides. The protein is Probable cytochrome P450 6w1 (Cyp6w1) of Drosophila melanogaster (Fruit fly).